Consider the following 170-residue polypeptide: Adenine phosphoribosyltransferase (170 aa).

This sequence belongs to the purine/pyrimidine phosphoribosyltransferase family. In terms of assembly, homodimer.

Its subcellular location is the cytoplasm. It carries out the reaction AMP + diphosphate = 5-phospho-alpha-D-ribose 1-diphosphate + adenine. It participates in purine metabolism; AMP biosynthesis via salvage pathway; AMP from adenine: step 1/1. In terms of biological role, catalyzes a salvage reaction resulting in the formation of AMP, that is energically less costly than de novo synthesis. The sequence is that of Adenine phosphoribosyltransferase from Enterococcus faecalis (strain ATCC 700802 / V583).